The primary structure comprises 833 residues: Leucine--tRNA ligase (833 aa).

The short motif at 41–52 (PYPSGVGLHVGH) is the 'HIGH' region element. A 'KMSKS' region motif is present at residues 610–614 (KMSKS). K613 lines the ATP pocket.

This sequence belongs to the class-I aminoacyl-tRNA synthetase family.

The protein localises to the cytoplasm. The catalysed reaction is tRNA(Leu) + L-leucine + ATP = L-leucyl-tRNA(Leu) + AMP + diphosphate. This Streptococcus pneumoniae serotype 2 (strain D39 / NCTC 7466) protein is Leucine--tRNA ligase.